Consider the following 559-residue polypeptide: MSFLCVRTVSRFRSLSRALAPGFLLLHGNAVPKTAVFFRQQSSNTRLFSSYTAPSGVEENNSKSALKNKLPPGKEVSSKDAKEKITTSAIDLALNSVVKVFTVSSKPRLFQPWQITMQSESTGSGFVISGKKILTNAHVVANQTSVKVRKHGSTTKYKAKVQAVGHECDLAILEIDNDKFWEGMNPLELGDIPSMQDTVYVVGYPKGGDTISVSKGVVSRVGPIKYSHSGTELLAIQIDAAINNGNSGGPVIMGNKVAGVAFESLCYSDSIGYIIPTPVIRHFLNAIEESGEDVSFGSINLTYQKMDNDQLRKDFKMSDKMTGILINKINPLSDVHKVLKKDDIILAIDGVPIGNDSSVHFRKKERITFKHLVSMKKPCETALLKVLREGKEYEFNSSLKSVPPLVPKRQYDKSASYYIFGGLVFLPLTKPYIDSSCVSESALGKMPKKAGEQVVIISQILEDDINTGYSIFEDFQVKKVNGVQVHNLKHLYKLVEECCTETVRMDLEKDKVITLDYKSAKKVTSKILKSLKIPSAVSEDLQPKQQNKRSKVPPKSKEH.

Residues 1 to 48 (MSFLCVRTVSRFRSLSRALAPGFLLLHGNAVPKTAVFFRQQSSNTRLF) constitute a mitochondrion transit peptide. The segment at 59–81 (ENNSKSALKNKLPPGKEVSSKDA) is disordered. Residues 100-292 (VFTVSSKPRL…FLNAIEESGE (193 aa)) form a serine protease region. Active-site charge relay system residues include His138, Asp169, and Ser247. Residues 300-380 (NLTYQKMDND…HLVSMKKPCE (81 aa)) enclose the PDZ domain. The interval 538-559 (SEDLQPKQQNKRSKVPPKSKEH) is disordered. A compositionally biased stretch (basic residues) spans 546–559 (QNKRSKVPPKSKEH).

Belongs to the peptidase S1C family.

It localises to the mitochondrion matrix. Functionally, putative serine protease. The sequence is that of Putative protease Do-like 3, mitochondrial (DEGP3) from Arabidopsis thaliana (Mouse-ear cress).